A 268-amino-acid chain; its full sequence is uncharacterized protein (268 aa).

This is an uncharacterized protein from Methanocaldococcus jannaschii (strain ATCC 43067 / DSM 2661 / JAL-1 / JCM 10045 / NBRC 100440) (Methanococcus jannaschii).